The chain runs to 860 residues: Probable inorganic carbon transporter subunit DabA (860 aa).

The interval 1 to 32 (MTTTSLGADAAHTHAMVPSAIPPEGSDAAGPD) is disordered. Cysteine 369, aspartate 371, histidine 551, and cysteine 566 together coordinate Zn(2+).

The protein belongs to the inorganic carbon transporter (TC 9.A.2) DabA family. In terms of assembly, forms a complex with DabB. It depends on Zn(2+) as a cofactor.

The protein resides in the cell inner membrane. Its function is as follows. Part of an energy-coupled inorganic carbon pump. The protein is Probable inorganic carbon transporter subunit DabA of Ralstonia pickettii (strain 12D).